The primary structure comprises 443 residues: MPSASLLKAAAVNALKMSQVGRGLCLPGMNRYMPVMHGAQGCTSFGLVLLVRDFREAIPLQTTAMNEVSSTLGGMENIAKAVLNIRLRAKRDLIAICSTGLTETKGDDVNAYLRLTAEAPRPGRYLTGLCPHALTTGASQDGWAKALEALAGRWESRGRADARQADNLLAGCHLTPADIEEMRDIVQSFGLEPIVLPDVSSWLDGHLPDNFSPTSMGGTTLAEMRALGASIVCIANRRTEAPPTAQAVQELCGVPYVVFDRLTGLQANDRFLAYLEYVSGQPIPARYRRQRSQLQDAMLGWPLLLRPGVKVAIGAEPEPVAVTLRHGWPRWAAELGGCRDHHDLAGARWRSPQPGWWIGANLEAPGTKGARARACAGSCWLTHSHGGQAAERLHIPFHRAGLPPCSTGLGAGHCLSVGYRGTRGLIFEIGQPVAGRGPCTYPG.

Cysteine 42 serves as a coordination point for [7Fe-Mo-9S-C-homocitryl] cluster.

It belongs to the NifD/NifK/NifE/NifN family.

It functions in the pathway cofactor biosynthesis; Fe-Mo cofactor biosynthesis. Its function is as follows. This protein may play a role in the biosynthesis of the prosthetic group of nitrogenase (FeMo cofactor). This is Nitrogenase iron-molybdenum cofactor biosynthesis protein NifN (nifN) from Herbaspirillum seropedicae.